A 582-amino-acid chain; its full sequence is DNA mismatch repair protein MutL (582 aa).

This sequence belongs to the DNA mismatch repair MutL/HexB family.

Functionally, this protein is involved in the repair of mismatches in DNA. It is required for dam-dependent methyl-directed DNA mismatch repair. May act as a 'molecular matchmaker', a protein that promotes the formation of a stable complex between two or more DNA-binding proteins in an ATP-dependent manner without itself being part of a final effector complex. This chain is DNA mismatch repair protein MutL, found in Chlamydia abortus (strain DSM 27085 / S26/3) (Chlamydophila abortus).